Consider the following 305-residue polypeptide: NAD-dependent protein deacylase SIR4 (305 aa).

Residues 1-10 constitute a mitochondrion transit peptide; the sequence is MSAQVMHNRV. Residues 11–305 form the Deacetylase sirtuin-type domain; it reads MGTVKDSASK…VLEELASTIR (295 aa). NAD(+) contacts are provided by residues 37 to 57 and 118 to 121; these read GAGV…GIYS and QNVD. Residue His139 is the Proton acceptor of the active site. Cys147, Cys150, Cys209, and Cys212 together coordinate Zn(2+). NAD(+) contacts are provided by residues 249 to 251, 275 to 277, and Ser293; these read GSS and NLG.

Belongs to the sirtuin family. Class II subfamily. The cofactor is Zn(2+).

The protein resides in the mitochondrion matrix. It catalyses the reaction N(6)-acetyl-L-lysyl-[protein] + NAD(+) + H2O = 2''-O-acetyl-ADP-D-ribose + nicotinamide + L-lysyl-[protein]. NAD-dependent protein deacylase. Catalyzes the NAD-dependent hydrolysis of acyl groups from lysine residues. The sequence is that of NAD-dependent protein deacylase SIR4 from Batrachochytrium dendrobatidis (strain JAM81 / FGSC 10211) (Frog chytrid fungus).